Reading from the N-terminus, the 281-residue chain is 4-diphosphocytidyl-2-C-methyl-D-erythritol kinase (281 aa).

Lys-15 is a catalytic residue. 98–108 (PTGAGLGGGSS) is an ATP binding site. Residue Asp-140 is part of the active site.

The protein belongs to the GHMP kinase family. IspE subfamily.

It carries out the reaction 4-CDP-2-C-methyl-D-erythritol + ATP = 4-CDP-2-C-methyl-D-erythritol 2-phosphate + ADP + H(+). Its pathway is isoprenoid biosynthesis; isopentenyl diphosphate biosynthesis via DXP pathway; isopentenyl diphosphate from 1-deoxy-D-xylulose 5-phosphate: step 3/6. Functionally, catalyzes the phosphorylation of the position 2 hydroxy group of 4-diphosphocytidyl-2C-methyl-D-erythritol. This chain is 4-diphosphocytidyl-2-C-methyl-D-erythritol kinase, found in Neisseria gonorrhoeae (strain ATCC 700825 / FA 1090).